We begin with the raw amino-acid sequence, 88 residues long: UPF0297 protein SGO_2042 (88 aa).

Belongs to the UPF0297 family.

The protein is UPF0297 protein SGO_2042 of Streptococcus gordonii (strain Challis / ATCC 35105 / BCRC 15272 / CH1 / DL1 / V288).